We begin with the raw amino-acid sequence, 126 residues long: UPF0538 protein C2orf76 (126 aa).

Belongs to the UPF0538 family.

In Homo sapiens (Human), this protein is UPF0538 protein C2orf76 (C2orf76).